A 195-amino-acid polypeptide reads, in one-letter code: Thymidylate kinase (195 aa).

7 to 14 (GVDTCGKS) provides a ligand contact to ATP.

This sequence belongs to the thymidylate kinase family.

It carries out the reaction dTMP + ATP = dTDP + ADP. Phosphorylation of dTMP to form dTDP in both de novo and salvage pathways of dTTP synthesis. The sequence is that of Thymidylate kinase from Helicobacter hepaticus (strain ATCC 51449 / 3B1).